The sequence spans 158 residues: Ecotin (158 aa).

Positions 1-21 (MRLLPLASVTLLSVLCAQAFA) are cleaved as a signal peptide. Cysteine 67 and cysteine 104 are joined by a disulfide.

Belongs to the protease inhibitor I11 (ecotin) family. In terms of assembly, homodimer.

It localises to the periplasm. In terms of biological role, general inhibitor of family S1 serine proteases. The chain is Ecotin from Pseudomonas fluorescens (strain ATCC BAA-477 / NRRL B-23932 / Pf-5).